The sequence spans 178 residues: Nucleoside-triphosphatase THEP1 (178 aa).

Residues 9–16 (GPVGSIKA) and 101–108 (VIIIDEVG) each bind ATP.

It belongs to the THEP1 NTPase family.

The enzyme catalyses a ribonucleoside 5'-triphosphate + H2O = a ribonucleoside 5'-diphosphate + phosphate + H(+). Has nucleotide phosphatase activity towards ATP, GTP, CTP, TTP and UTP. May hydrolyze nucleoside diphosphates with lower efficiency. The sequence is that of Nucleoside-triphosphatase THEP1 from Thermoplasma volcanium (strain ATCC 51530 / DSM 4299 / JCM 9571 / NBRC 15438 / GSS1).